The primary structure comprises 375 residues: DNA replication and repair protein RecF (375 aa).

30–37 provides a ligand contact to ATP; it reads GENAQGKT.

It belongs to the RecF family.

It is found in the cytoplasm. In terms of biological role, the RecF protein is involved in DNA metabolism; it is required for DNA replication and normal SOS inducibility. RecF binds preferentially to single-stranded, linear DNA. It also seems to bind ATP. In Bacillus cereus (strain ZK / E33L), this protein is DNA replication and repair protein RecF.